The chain runs to 183 residues: Apo-citrate lyase phosphoribosyl-dephospho-CoA transferase (183 aa).

It belongs to the CitX family.

It carries out the reaction apo-[citrate lyase ACP] + 2'-(5''-triphospho-alpha-D-ribosyl)-3'-dephospho-CoA = holo-[citrate lyase ACP] + diphosphate. In terms of biological role, transfers 2-(5''-triphosphoribosyl)-3'-dephosphocoenzyme-A on a serine residue to the apo-acyl carrier protein (gamma chain) of the citrate lyase to yield holo-acyl carrier protein. The polypeptide is Apo-citrate lyase phosphoribosyl-dephospho-CoA transferase (Escherichia coli O139:H28 (strain E24377A / ETEC)).